The chain runs to 398 residues: Acetate kinase (398 aa).

Residue N8 coordinates Mg(2+). ATP is bound at residue K15. R89 provides a ligand contact to substrate. The active-site Proton donor/acceptor is the D146. ATP is bound by residues 206-210, 283-285, and 331-335; these read HIGNG, DMR, and GMGEN. E383 contributes to the Mg(2+) binding site.

It belongs to the acetokinase family. Homodimer. The cofactor is Mg(2+). Requires Mn(2+) as cofactor.

It is found in the cytoplasm. It carries out the reaction acetate + ATP = acetyl phosphate + ADP. It participates in metabolic intermediate biosynthesis; acetyl-CoA biosynthesis; acetyl-CoA from acetate: step 1/2. Functionally, catalyzes the formation of acetyl phosphate from acetate and ATP. Can also catalyze the reverse reaction. The chain is Acetate kinase from Streptococcus pyogenes serotype M5 (strain Manfredo).